The sequence spans 201 residues: Dermatopontin (201 aa).

The first 18 residues, 1–18 (MDLSLLWVLLPLVTMAWG), serve as a signal peptide directing secretion. Q19 bears the Pyrrolidone carboxylic acid mark. At Y23 the chain carries Sulfotyrosine. Repeat copies occupy residues 26–79 (PYQQ…ACMP), 70–75 (DRQWNY), 80–135 (TPQS…CCRY), and 125–130 (DREWQF). The 2 X 53-55 AA tandem repeats stretch occupies residues 26 to 186 (PYQQYHDYSD…AVERDRQWKF (161 aa)). 5 disulfides stabilise this stretch: C50-C77, C90-C132, C106-C133, C139-C196, and C143-C189. The 3 X 6 AA repeats of D-R-[EQ]-W-[NQK]-[FY] stretch occupies residues 70-186 (DRQWNYACMP…AVERDRQWKF (117 aa)). A sulfotyrosine mark is found at Y162, Y164, Y166, and Y167. The 3-3 repeat unit spans residues 181–186 (DRQWKF). At Y194 the chain carries Sulfotyrosine.

It belongs to the dermatopontin family. In terms of assembly, interacts with TGFB1, DCN and collagen. In terms of processing, sulfated on tyrosine residue(s). As to expression, expressed in fibroblasts, heart, skeletal muscle, brain and pancreas. Expressed at an intermediate level in lung and kidney, and at a low level in liver and placenta. Expressed at a lower level in fibroblasts from hypertrophic scar lesional skin and in fibroblasts from patients with systemic sclerosis than in normal skin fibroblasts.

Its subcellular location is the secreted. It localises to the extracellular space. The protein resides in the extracellular matrix. Its function is as follows. Seems to mediate adhesion by cell surface integrin binding. May serve as a communication link between the dermal fibroblast cell surface and its extracellular matrix environment. Enhances TGFB1 activity. Inhibits cell proliferation. Accelerates collagen fibril formation, and stabilizes collagen fibrils against low-temperature dissociation. The protein is Dermatopontin (DPT) of Homo sapiens (Human).